The primary structure comprises 523 residues: Sensory neuron membrane protein 1 (523 aa).

Topologically, residues Met1 to Ala11 are cytoplasmic. The helical transmembrane segment at Ile12–Leu32 threads the bilayer. Over Lys33–Val458 the chain is Extracellular. N-linked (GlcNAc...) asparagine glycosylation is present at Asn229. 3 cysteine pairs are disulfide-bonded: Cys268-Cys333, Cys297-Cys352, and Cys335-Cys341. The N-linked (GlcNAc...) asparagine glycan is linked to Asn440. Residues Gly459–Phe479 traverse the membrane as a helical segment. Topologically, residues His480 to Ile523 are cytoplasmic.

The protein belongs to the CD36 family.

The protein resides in the cell membrane. Functionally, plays an olfactory role that is not restricted to pheromone sensitivity. This chain is Sensory neuron membrane protein 1, found in Helicoverpa assulta (Oriental tobacco budworm).